The following is a 113-amino-acid chain: Kita-kyushu lung cancer antigen 1 (113 aa).

The Cytoplasmic segment spans residues 1–3 (MNF). Residues 4–21 (YLLLASSILCALIVFWKY) form a helical; Signal-anchor for type II membrane protein membrane-spanning segment. Over 22 to 113 (RRFQRNTGEM…RGASPHRKST (92 aa)) the chain is Extracellular. Asn83 carries an N-linked (GlcNAc...) asparagine glycan.

As to expression, specifically expressed in testis. Expressed by cancer cell lines.

The protein resides in the cell membrane. This Homo sapiens (Human) protein is Kita-kyushu lung cancer antigen 1 (CT83).